The following is a 226-amino-acid chain: Enolase-phosphatase E1 (226 aa).

Belongs to the HAD-like hydrolase superfamily. MasA/MtnC family. As to quaternary structure, monomer. Requires Mg(2+) as cofactor.

It catalyses the reaction 5-methylsulfanyl-2,3-dioxopentyl phosphate + H2O = 1,2-dihydroxy-5-(methylsulfanyl)pent-1-en-3-one + phosphate. It functions in the pathway amino-acid biosynthesis; L-methionine biosynthesis via salvage pathway; L-methionine from S-methyl-5-thio-alpha-D-ribose 1-phosphate: step 3/6. The protein operates within amino-acid biosynthesis; L-methionine biosynthesis via salvage pathway; L-methionine from S-methyl-5-thio-alpha-D-ribose 1-phosphate: step 4/6. Bifunctional enzyme that catalyzes the enolization of 2,3-diketo-5-methylthiopentyl-1-phosphate (DK-MTP-1-P) into the intermediate 2-hydroxy-3-keto-5-methylthiopentenyl-1-phosphate (HK-MTPenyl-1-P), which is then dephosphorylated to form the acireductone 1,2-dihydroxy-3-keto-5-methylthiopentene (DHK-MTPene). The protein is Enolase-phosphatase E1 of Alcanivorax borkumensis (strain ATCC 700651 / DSM 11573 / NCIMB 13689 / SK2).